A 324-amino-acid chain; its full sequence is Probable fructokinase-5 (324 aa).

The protein belongs to the carbohydrate kinase PfkB family.

It carries out the reaction D-fructose + ATP = D-fructose 6-phosphate + ADP + H(+). It functions in the pathway glycan biosynthesis; starch biosynthesis. Its function is as follows. May play an important role in maintaining the flux of carbon towards starch formation. This Arabidopsis thaliana (Mouse-ear cress) protein is Probable fructokinase-5.